The primary structure comprises 151 residues: MGSDDLSTGDKIQKGFQINYMILRDADTGKVIWQENKDFSAPDLEHEARVPVKILDMRAVSREINFSTIEAMENFRLDQKVLFKGRIMEEWFFEMGFVGANTTNTWQSTIEAAPESQMMPAKVLNGNVTIQTSFYDNETLITKSVVRLYYI.

It belongs to the PDE6D/unc-119 family. In terms of assembly, interacts with Pde6.

Its subcellular location is the nucleus. It is found in the cytoplasm. The protein is Probable cGMP 3',5'-cyclic phosphodiesterase subunit delta of Drosophila grimshawi (Hawaiian fruit fly).